The primary structure comprises 594 residues: UvrABC system protein C (594 aa).

Positions 13-99 (NSSGVYQYFD…IKQLKPKYNI (87 aa)) constitute a GIY-YIG domain. The 36-residue stretch at 205–240 (DRLIKELELKMERLSSKLRFEEALIYRDRIAKIQKI) folds into the UVR domain.

This sequence belongs to the UvrC family. Interacts with UvrB in an incision complex.

The protein localises to the cytoplasm. In terms of biological role, the UvrABC repair system catalyzes the recognition and processing of DNA lesions. UvrC both incises the 5' and 3' sides of the lesion. The N-terminal half is responsible for the 3' incision and the C-terminal half is responsible for the 5' incision. This chain is UvrABC system protein C, found in Helicobacter pylori (strain P12).